A 208-amino-acid polypeptide reads, in one-letter code: Large ribosomal subunit protein uL3 (208 aa).

Residue glutamine 149 is modified to N5-methylglutamine.

Belongs to the universal ribosomal protein uL3 family. Part of the 50S ribosomal subunit. Forms a cluster with proteins L14 and L19. In terms of processing, methylated by PrmB.

Functionally, one of the primary rRNA binding proteins, it binds directly near the 3'-end of the 23S rRNA, where it nucleates assembly of the 50S subunit. The sequence is that of Large ribosomal subunit protein uL3 from Actinobacillus succinogenes (strain ATCC 55618 / DSM 22257 / CCUG 43843 / 130Z).